Reading from the N-terminus, the 981-residue chain is Protein deadlock (981 aa).

Positions 1–60 (MEKLDKIRMSQKLSCWQHILTTLGTSSKTEQEWNTFFKGFLESWRKPYCIQTSCDPSIPL) are required for interaction with rhi/rhino. Disordered stretches follow at residues 72–195 (LQEN…ACAP), 274–307 (IMDK…DDQL), 327–352 (SRNE…NKKE), 375–446 (LRKS…PNNI), 554–586 (GLDD…ETLK), and 642–662 (LVHQ…TAAR). Polar residues-rich tracts occupy residues 104 to 113 (PSKSHSTGST) and 150 to 160 (NHTTSIFSKAQ). Residues 167-191 (KLSSTKKRPDTCAPTDDSRKNREPR) are compositionally biased toward basic and acidic residues. The segment covering 337-352 (EKVKLKGERPAQNKKE) has biased composition (basic and acidic residues). The span at 377-390 (KSVKKSAKQQKPRV) shows a compositional bias: basic residues. Over residues 409-419 (TQDKQSTHEMI) the composition is skewed to basic and acidic residues. Residues 422 to 446 (QAKTISEASGQQTSQVQSSLSPNNI) show a composition bias toward polar residues. The segment covering 652–662 (RNQRDEATAAR) has biased composition (basic and acidic residues).

In terms of assembly, component of the Rhino-Deadlock-Cutoff (RDC) complex, composed of rhi/rhino, del/deadlock and cuff/cutoff. Interacts (via N-terminus) with rhi/rhino (via C-terminus); this interaction is direct. Interacts (via C-terminus) with cuff/cutoff; this interaction is direct.

Its subcellular location is the nucleus. It localises to the cytoplasm. It is found in the cytoskeleton. The protein resides in the microtubule organizing center. The protein localises to the centrosome. Its subcellular location is the chromosome. In terms of biological role, developmental protein involved in oogenesis. Required for germline maintenance, stability of mitotic spindles, localization of patterning determinants, oocyte growth and fusome biogenesis in males and females. Also required for dorso-ventral and antero-posterior patterning of oocyte and eggshell. May be involved in microtubule function during oogenesis. Part of a rhi-dependent transcription machinery that enables the generation of piRNA precursors from heterochromatin while maintaining the suppression of transposon-encoded promoters and enhancers. Component of the RDC complex (rhi, del and cuff) which binds to repressive H3K9me3 marks in the piRNA clusters. RDC promotes the bidirectional transcription of piRNA clusters at these sites by interacting with Moonshiner which forms a complex with the transcription initiation factors TfIIA-S and Trf2. This mechanism allows transcription to occur in piRNA clusters despite the lack of proper promoter elements and in the presence of the repressive H3K9me3 mark. As part of the RDC complex, involved in suppression of splicing. The chain is Protein deadlock (del) from Drosophila melanogaster (Fruit fly).